The sequence spans 630 residues: 1-deoxy-D-xylulose-5-phosphate synthase (630 aa).

Thiamine diphosphate contacts are provided by residues His-73 and 114-116 (SHA). Asp-146 provides a ligand contact to Mg(2+). Residues 147–148 (GA), Asn-176, Phe-287, and Glu-371 contribute to the thiamine diphosphate site. Asn-176 contributes to the Mg(2+) binding site.

Belongs to the transketolase family. DXPS subfamily. Homodimer. The cofactor is Mg(2+). Requires thiamine diphosphate as cofactor.

The catalysed reaction is D-glyceraldehyde 3-phosphate + pyruvate + H(+) = 1-deoxy-D-xylulose 5-phosphate + CO2. It participates in metabolic intermediate biosynthesis; 1-deoxy-D-xylulose 5-phosphate biosynthesis; 1-deoxy-D-xylulose 5-phosphate from D-glyceraldehyde 3-phosphate and pyruvate: step 1/1. Its function is as follows. Catalyzes the acyloin condensation reaction between C atoms 2 and 3 of pyruvate and glyceraldehyde 3-phosphate to yield 1-deoxy-D-xylulose-5-phosphate (DXP). The polypeptide is 1-deoxy-D-xylulose-5-phosphate synthase (Corynebacterium jeikeium (strain K411)).